Consider the following 291-residue polypeptide: Kidney mitochondrial carrier protein 1 (291 aa).

Position 2 is an N-acetylserine (Ser-2). Solcar repeat units lie at residues Lys-7–Leu-96, Glu-104–His-189, and Asp-198–Leu-289. The next 6 membrane-spanning stretches (helical) occupy residues Phe-9 to Ile-26, Gly-71 to Thr-89, Leu-106 to Ala-124, Gly-164 to Tyr-183, Phe-204 to Val-224, and Gly-264 to Tyr-283.

Belongs to the mitochondrial carrier (TC 2.A.29) family. In terms of assembly, interacts with VDAC1. In terms of tissue distribution, present in kidney (at protein level). Expressed predominantly within the kidney cortex in the proximal and distal tubules and at lower levels in the testis and white adipose tissue.

Its subcellular location is the mitochondrion inner membrane. The catalysed reaction is sulfite(in) + sulfate(out) = sulfite(out) + sulfate(in). It catalyses the reaction thiosulfate(in) + sulfate(out) = thiosulfate(out) + sulfate(in). The enzyme catalyses sulfate(out) + phosphate(in) = sulfate(in) + phosphate(out). It carries out the reaction oxalate(in) + sulfate(out) = oxalate(out) + sulfate(in). The catalysed reaction is malonate(in) + sulfate(out) = malonate(out) + sulfate(in). It catalyses the reaction maleate(in) + sulfate(out) = maleate(out) + sulfate(in). The enzyme catalyses (S)-malate(in) + sulfate(out) = (S)-malate(out) + sulfate(in). It carries out the reaction (3S)-citramalate(in) + sulfate(out) = (3S)-citramalate(out) + sulfate(in). The catalysed reaction is (3R)-citramalate(in) + sulfate(out) = (3R)-citramalate(out) + sulfate(in). It catalyses the reaction sulfate(out) + succinate(in) = sulfate(in) + succinate(out). The enzyme catalyses (S,S)-tartrate(in) + sulfate(out) = (S,S)-tartrate(out) + sulfate(in). It carries out the reaction (2R,3R)-tartrate(in) + sulfate(out) = (2R,3R)-tartrate(out) + sulfate(in). The catalysed reaction is D-aspartate(in) + sulfate(out) = D-aspartate(out) + sulfate(in). It catalyses the reaction L-aspartate(in) + sulfate(out) = L-aspartate(out) + sulfate(in). The enzyme catalyses sulfate(in) = sulfate(out). It carries out the reaction phosphate(in) = phosphate(out). The catalysed reaction is (S)-malate(out) = (S)-malate(in). In terms of biological role, antiporter that transports inorganic anions (sulfate, sulfite, thiosulfate and phosphate) and, to a lesser extent, a variety of dicarboxylates (e.g. malonate, malate and citramalate) and, even more so, aspartate. The sulfate/sulfate exchange is much higher than the phosphate/phosphate and malate/malate exchanges. The transport affinities is higher for sulfate and thiosulfate than for any other substrate. May catalyze the export of sulfite and thiosulfate (the hydrogen sulfide degradation products) from the mitochondria, thereby modulating the level of the hydrogen sulfide. Also may mediate a very low unidirectional transport of sulfate, phosphate and (S)-malate. The protein is Kidney mitochondrial carrier protein 1 of Mus musculus (Mouse).